Reading from the N-terminus, the 380-residue chain is Cytochrome b (380 aa).

Helical transmembrane passes span 34–54 (FGSLLAVCLATQILTGLLLAM), 78–99 (WLIRNLHANGASFFFICIFLHI), 114–134 (WNTGVILLLTLMATAFVGYVL), and 179–199 (FFALHFLLPFVIAGITVTHLM). His-84 and His-98 together coordinate heme b. Heme b is bound by residues His-183 and His-197. His-202 contributes to the a ubiquinone binding site. Transmembrane regions (helical) follow at residues 227–247 (LKDILGLALMLTPFLTLALFS), 289–309 (LGGVLALAASVLILLLIPFLH), 321–341 (LSQALFWLLVANLLILTWVGS), and 348–368 (FIIIGQMASFSYFTILLSLLP).

Belongs to the cytochrome b family. The cytochrome bc1 complex contains 11 subunits: 3 respiratory subunits (MT-CYB, CYC1 and UQCRFS1), 2 core proteins (UQCRC1 and UQCRC2) and 6 low-molecular weight proteins (UQCRH/QCR6, UQCRB/QCR7, UQCRQ/QCR8, UQCR10/QCR9, UQCR11/QCR10 and a cleavage product of UQCRFS1). This cytochrome bc1 complex then forms a dimer. The cofactor is heme b.

Its subcellular location is the mitochondrion inner membrane. Its function is as follows. Component of the ubiquinol-cytochrome c reductase complex (complex III or cytochrome b-c1 complex) that is part of the mitochondrial respiratory chain. The b-c1 complex mediates electron transfer from ubiquinol to cytochrome c. Contributes to the generation of a proton gradient across the mitochondrial membrane that is then used for ATP synthesis. The chain is Cytochrome b (MT-CYB) from Crossoptilon crossoptilon (White-eared pheasant).